The primary structure comprises 675 residues: Heat shock 70 kDa protein 12A (675 aa).

The segment covering 1 to 13 has biased composition (basic and acidic residues); that stretch reads MADKEAGGSDGPR. A disordered region spans residues 1 to 45; sequence MADKEAGGSDGPRETAPTSAYSSPARSLGDTGITPLSPSHIVNDT. Ala-2 carries the post-translational modification N-acetylalanine. Polar residues-rich tracts occupy residues 16–25 and 34–45; these read APTSAYSSPA and TPLSPSHIVNDT.

This sequence belongs to the heat shock protein 70 family. As to quaternary structure, interacts with SORL1 (via cytosolic C-terminus); this interaction affects SORL1 internalization and subcellular localization. In terms of tissue distribution, widely expressed with highest levels in brain, kidney and muscle.

It localises to the cytoplasm. Its subcellular location is the nucleus. Adapter protein for SORL1, but not SORT1. Delays SORL1 internalization and affects SORL1 subcellular localization. This Homo sapiens (Human) protein is Heat shock 70 kDa protein 12A (HSPA12A).